Consider the following 311-residue polypeptide: Fructose-1,6-bisphosphatase class 1 (311 aa).

4 residues coordinate Mg(2+): Glu-90, Asp-110, Leu-112, and Asp-113. Substrate is bound by residues 113–116, Tyr-221, and Lys-251; that span reads DGSS. Glu-257 contacts Mg(2+).

This sequence belongs to the FBPase class 1 family. As to quaternary structure, homotetramer. Mg(2+) is required as a cofactor.

Its subcellular location is the cytoplasm. The catalysed reaction is beta-D-fructose 1,6-bisphosphate + H2O = beta-D-fructose 6-phosphate + phosphate. It participates in carbohydrate biosynthesis; gluconeogenesis. This Methanospirillum hungatei JF-1 (strain ATCC 27890 / DSM 864 / NBRC 100397 / JF-1) protein is Fructose-1,6-bisphosphatase class 1.